Here is a 387-residue protein sequence, read N- to C-terminus: MDISKVDSTRALVNHWRIFRIMGIHPPGKRTFWGRHYTAYSMVWNVTFHICIWVSFSVNLLQSNSLETFCESLCVTMPHTLYMLKLINVRRMRGQMISSHWLLRLLDKRLGCDDERQIIMAGIERAEFIFRTIFRGLACTVVLGIIYISASSEPTLMYPTWIPWNWRDSTSAYLATAMLHTTALMANATLVLNLSSYPGTYLILVSVHTKALALRVSKLGYGAPLPAVRMQAILVGYIHDHQIILRLFKSLERSLSMTCFLQFFSTACAQCTICYFLLFGNVGIMRFMNMLFLLVILTTETLLLCYTAELPCKEGESLLTAVYSCNWLSQSVNFRRLLLLMLARCQIPMILVSGVIVPISMKTFTVMIKGAYTMLTLLNEIRKTSLE.

The Cytoplasmic portion of the chain corresponds to 1-40; the sequence is MDISKVDSTRALVNHWRIFRIMGIHPPGKRTFWGRHYTAY. Residues 41-61 traverse the membrane as a helical segment; the sequence is SMVWNVTFHICIWVSFSVNLL. At 62–71 the chain is on the extracellular side; the sequence is QSNSLETFCE. The chain crosses the membrane as a helical span at residues 72 to 92; sequence SLCVTMPHTLYMLKLINVRRM. The Cytoplasmic segment spans residues 93-127; the sequence is RGQMISSHWLLRLLDKRLGCDDERQIIMAGIERAE. Residues 128–148 form a helical membrane-spanning segment; that stretch reads FIFRTIFRGLACTVVLGIIYI. The Extracellular segment spans residues 149 to 171; the sequence is SASSEPTLMYPTWIPWNWRDSTS. A helical membrane pass occupies residues 172–192; the sequence is AYLATAMLHTTALMANATLVL. The Cytoplasmic portion of the chain corresponds to 193-254; the sequence is NLSSYPGTYL…LRLFKSLERS (62 aa). The chain crosses the membrane as a helical span at residues 255–275; it reads LSMTCFLQFFSTACAQCTICY. Over 276–285 the chain is Extracellular; that stretch reads FLLFGNVGIM. Residues 286–306 traverse the membrane as a helical segment; the sequence is RFMNMLFLLVILTTETLLLCY. Residues 307–336 are Cytoplasmic-facing; that stretch reads TAELPCKEGESLLTAVYSCNWLSQSVNFRR. A helical transmembrane segment spans residues 337 to 357; it reads LLLLMLARCQIPMILVSGVIV. The Extracellular segment spans residues 358–387; sequence PISMKTFTVMIKGAYTMLTLLNEIRKTSLE.

It belongs to the insect chemoreceptor superfamily. Heteromeric odorant receptor channel (TC 1.A.69) family. Or2a subfamily. As to quaternary structure, interacts with Orco. Complexes exist early in the endomembrane system in olfactory sensory neurons (OSNs), coupling these complexes to the conserved ciliary trafficking pathway. As to expression, expressed in ai2A olfactory sensory neurons in the antenna.

It localises to the cell membrane. Functionally, odorant receptor which mediates acceptance or avoidance behavior, depending on its substrates. The odorant receptor repertoire encodes a large collection of odor stimuli that vary widely in identity, intensity, and duration. May form a complex with Orco to form odorant-sensing units, providing sensitive and prolonged odorant signaling and calcium permeability. Involved in the preference for citrus fruits for oviposition, especially through the response to valencene, the primary ligand of Or19a. Larvae growing on citrus fruits suffer a reduced risk of parasitism since endoparasitoid wasps that parasitize larvae are strongly repelled by the smell of citrus, as well as by valencene. This Drosophila melanogaster (Fruit fly) protein is Odorant receptor 19a (Or19a).